A 466-amino-acid chain; its full sequence is Cytochrome c-552 (466 aa).

Residues methionine 1–alanine 27 form the signal peptide. Histidine 87 contacts heme c. Heme contacts are provided by cysteine 115, cysteine 118, and lysine 119. Positions 153, 156, 157, 195, 198, and 199 each coordinate heme c. Ca(2+) contacts are provided by glutamate 201, tyrosine 202, lysine 250, and glutamine 252. Residue tyrosine 202 participates in substrate binding. Position 253 (histidine 253) interacts with substrate. Heme c-binding residues include histidine 264, cysteine 271, cysteine 274, histidine 275, histidine 290, cysteine 303, cysteine 306, histidine 307, and histidine 382.

It belongs to the cytochrome c-552 family. Ca(2+) serves as cofactor. Requires heme c as cofactor.

The protein localises to the periplasm. It carries out the reaction 6 Fe(III)-[cytochrome c] + NH4(+) + 2 H2O = 6 Fe(II)-[cytochrome c] + nitrite + 8 H(+). It functions in the pathway nitrogen metabolism; nitrate reduction (assimilation). In terms of biological role, catalyzes the reduction of nitrite to ammonia, consuming six electrons in the process. This Shewanella woodyi (strain ATCC 51908 / MS32) protein is Cytochrome c-552.